The following is a 399-amino-acid chain: Accessory Sec system protein translocase subunit SecY2 (399 aa).

10 consecutive transmembrane segments (helical) span residues 14 to 34, 60 to 80, 102 to 122, 128 to 148, 152 to 172, 183 to 203, 237 to 257, 272 to 292, 335 to 355, and 362 to 382; these read IFFT…SIVS, LNIF…LTLI, ALTL…YINK, SNML…VWLA, TTYG…KSIF, ASLI…LFFI, ISIM…NFIG, FTNP…GYFL, WFGS…ALLV, and VYFT…AETI.

Belongs to the SecY/SEC61-alpha family. SecY2 subfamily. Component of the accessory SecA2/SecY2 protein translocase complex required to export cell wall proteins. May form heterotrimers with SecE and SecG subunits.

It localises to the cell membrane. Part of the accessory SecA2/SecY2 system specifically required for export of possible cell wall proteins. The central subunit of a protein translocation channel. The polypeptide is Accessory Sec system protein translocase subunit SecY2 (Staphylococcus epidermidis (strain ATCC 12228 / FDA PCI 1200)).